The chain runs to 311 residues: Malate dehydrogenase (311 aa).

Residues 7–13 and D34 contribute to the NAD(+) site; that span reads GAAGGIG. The substrate site is built by R81 and R87. NAD(+) is bound by residues N94 and 117 to 119; that span reads ITN. N119 and R153 together coordinate substrate. Residue H177 is the Proton acceptor of the active site. M227 is a binding site for NAD(+).

Belongs to the LDH/MDH superfamily. MDH type 1 family. As to quaternary structure, homodimer.

The catalysed reaction is (S)-malate + NAD(+) = oxaloacetate + NADH + H(+). In terms of biological role, catalyzes the reversible oxidation of malate to oxaloacetate. This chain is Malate dehydrogenase, found in Haemophilus influenzae (strain 86-028NP).